Reading from the N-terminus, the 488-residue chain is Photosystem II CP43 reaction center protein (488 aa).

Residues 1–29 constitute a propeptide that is removed on maturation; that stretch reads MTKVFALGWLLKINLMKTLYSLRRFYHVE. A run of 5 helical transmembrane segments spans residues 84–108, 149–170, 193–215, 270–290, and 306–327; these read LFEV…PHLA, LIGP…RDKN, KALF…RFVS, KPFA…LSYS, and WYNN…ASQA. [CaMn4O5] cluster is bound at residue glutamate 382. Residues 462-486 form a helical membrane-spanning segment; that stretch reads RARAAAAGFEKGINRENEPVLSMRP.

Belongs to the PsbB/PsbC family. PsbC subfamily. As to quaternary structure, PSII is composed of 1 copy each of membrane proteins PsbA, PsbB, PsbC, PsbD, PsbE, PsbF, PsbH, PsbI, PsbJ, PsbK, PsbL, PsbM, PsbT, PsbX, PsbY, PsbZ, Psb30/Ycf12, at least 3 peripheral proteins of the oxygen-evolving complex and a large number of cofactors. It forms dimeric complexes. Requires Binds multiple chlorophylls and provides some of the ligands for the Ca-4Mn-5O cluster of the oxygen-evolving complex. It may also provide a ligand for a Cl- that is required for oxygen evolution. PSII binds additional chlorophylls, carotenoids and specific lipids. as cofactor.

It localises to the plastid. Its subcellular location is the chloroplast thylakoid membrane. Functionally, one of the components of the core complex of photosystem II (PSII). It binds chlorophyll and helps catalyze the primary light-induced photochemical processes of PSII. PSII is a light-driven water:plastoquinone oxidoreductase, using light energy to abstract electrons from H(2)O, generating O(2) and a proton gradient subsequently used for ATP formation. This chain is Photosystem II CP43 reaction center protein, found in Pyropia yezoensis (Susabi-nori).